Reading from the N-terminus, the 130-residue chain is DNA-directed RNA polymerase subunit omega (130 aa).

The tract at residues 80–130 is disordered; the sequence is PEPDTVPLIGSAGASVDADDTEVAPERMTEEELLKGLEGLAPPEEQPEEDE. Positions 103-114 are enriched in basic and acidic residues; sequence APERMTEEELLK.

Belongs to the RNA polymerase subunit omega family. The RNAP catalytic core consists of 2 alpha, 1 beta, 1 beta' and 1 omega subunit. When a sigma factor is associated with the core the holoenzyme is formed, which can initiate transcription.

It carries out the reaction RNA(n) + a ribonucleoside 5'-triphosphate = RNA(n+1) + diphosphate. Promotes RNA polymerase assembly. Latches the N- and C-terminal regions of the beta' subunit thereby facilitating its interaction with the beta and alpha subunits. This chain is DNA-directed RNA polymerase subunit omega, found in Rhodopseudomonas palustris (strain BisB18).